The chain runs to 151 residues: MATSGTYVTEVPLKGSADKHYKRWRDENHLFPDAIGHHIQGVTVHDGEWDSHEAIKIWNYTCDGKPEVFKERKEIDDENMVITFRGLEGHVMEQLKVYDLIYQFSQKSPDDIVCKITMIWEKRTDDSPEPSNYMKFLKSVVADMDEHVLKA.

The protein belongs to the MLP family.

In Arabidopsis thaliana (Mouse-ear cress), this protein is MLP-like protein 329 (MLP329).